Reading from the N-terminus, the 693-residue chain is ATP-dependent DNA helicase RecG (693 aa).

A wedge domain region spans residues 48–146; the sequence is THLYPIGELL…GDLSTPELQE (99 aa). The Helicase ATP-binding domain maps to 283 to 448; sequence DMALDVPMMR…AYADLDTSVI (166 aa). ATP is bound at residue 296-303; sequence GDVGSGKT. Positions 397–400 match the DEAH box motif; that stretch reads DEQH. In terms of domain architecture, Helicase C-terminal spans 482-628; the sequence is EGRQAYWVCT…GFVIAQKDLE (147 aa).

Belongs to the helicase family. RecG subfamily. In terms of assembly, monomer in solution. Probably a monomer on HJ DNA. Binding to fork DNA is facilitated by SSB; the proteins do not seem to stably associate. Mg(2+) serves as cofactor.

The catalysed reaction is Couples ATP hydrolysis with the unwinding of duplex DNA by translocating in the 3'-5' direction.. The enzyme catalyses ATP + H2O = ADP + phosphate + H(+). In terms of biological role, plays a critical role in recombination and DNA repair. Helps process Holliday junction (HJ) intermediates to mature products by catalyzing branch migration. Has replication fork regression activity, unwinds stalled or blocked replication forks to make a HJ that can be resolved by RuvC or RusA. Also rewinds unwound dsDNA in an ATP-dependent manner. Has double-stranded (ds)DNA unwinding activity characteristic of a DNA helicase with 3'-5' polarity in vitro on linear dsDNA; branched duplex DNA (Y-DNA) substrates adopt different conformations that influence which of the two arms are unwound. Binds and unwinds HJ and Y-DNA but not linear duplex DNA; binds no more than 10 nucleotides of ssDNA at a fork. Has a role in constitutive stable DNA replication (cSDR, DNA replication in the absence of protein synthesis) and R-loop (RNA annealed with dsDNA) formation. Unwinds R-loops but not RNA:DNA hybrids. Is genetically synergistic to RadA and RuvABC. The sequence is that of ATP-dependent DNA helicase RecG from Escherichia coli (strain K12).